The primary structure comprises 417 residues: Serine hydroxymethyltransferase (417 aa).

(6S)-5,6,7,8-tetrahydrofolate is bound by residues Leu-121 and 125-127; that span reads GHL. Lys-229 is modified (N6-(pyridoxal phosphate)lysine). 355–357 contacts (6S)-5,6,7,8-tetrahydrofolate; the sequence is SPF.

This sequence belongs to the SHMT family. As to quaternary structure, homodimer. The cofactor is pyridoxal 5'-phosphate.

It is found in the cytoplasm. It carries out the reaction (6R)-5,10-methylene-5,6,7,8-tetrahydrofolate + glycine + H2O = (6S)-5,6,7,8-tetrahydrofolate + L-serine. The protein operates within one-carbon metabolism; tetrahydrofolate interconversion. It functions in the pathway amino-acid biosynthesis; glycine biosynthesis; glycine from L-serine: step 1/1. Catalyzes the reversible interconversion of serine and glycine with tetrahydrofolate (THF) serving as the one-carbon carrier. This reaction serves as the major source of one-carbon groups required for the biosynthesis of purines, thymidylate, methionine, and other important biomolecules. Also exhibits THF-independent aldolase activity toward beta-hydroxyamino acids, producing glycine and aldehydes, via a retro-aldol mechanism. The protein is Serine hydroxymethyltransferase of Stenotrophomonas maltophilia (strain R551-3).